Consider the following 396-residue polypeptide: Phosphoglycerate kinase (396 aa).

Residues 22-24 (DFN), Arg-37, 60-63 (HFGR), Arg-118, and Arg-151 each bind substrate. Residues Lys-201, Glu-322, and 352-355 (GGDS) contribute to the ATP site.

Belongs to the phosphoglycerate kinase family. Monomer.

It localises to the cytoplasm. The enzyme catalyses (2R)-3-phosphoglycerate + ATP = (2R)-3-phospho-glyceroyl phosphate + ADP. It functions in the pathway carbohydrate degradation; glycolysis; pyruvate from D-glyceraldehyde 3-phosphate: step 2/5. The polypeptide is Phosphoglycerate kinase (Wolbachia pipientis subsp. Culex pipiens (strain wPip)).